The chain runs to 328 residues: DNA polymerase III subunit delta' (328 aa).

As to quaternary structure, DNA polymerase III contains a core (composed of alpha, epsilon and theta chains) that associates with a tau subunit. This core dimerizes to form the POLIII' complex. PolIII' associates with the gamma complex (composed of gamma, delta, delta', psi and chi chains) and with the beta chain to form the complete DNA polymerase III complex.

The enzyme catalyses DNA(n) + a 2'-deoxyribonucleoside 5'-triphosphate = DNA(n+1) + diphosphate. Functionally, DNA polymerase III is a complex, multichain enzyme responsible for most of the replicative synthesis in bacteria. This DNA polymerase also exhibits 3' to 5' exonuclease activity. The protein is DNA polymerase III subunit delta' (holB) of Buchnera aphidicola subsp. Schizaphis graminum (strain Sg).